The chain runs to 562 residues: MNWLKTTLQIYPEIAVFLSLAIGYWVGNKTFKGFSLGAVTATLLAAVVIGQFDITLSSNVKSIFFLMFLFAVGYGIGPQFVQGIAKDGLPQALFAVVACLFSLLFPILCAKIAGYDLGATAGFFAGTQTISASMGLATDAIVHLDLPAEESKKMFSVIPVAYAVTYIFGTVGSAIVLAQIIPKLLRIDLEAACKDYMAKNGGTTENARGEWHTYALRSYKLTEKNRAVGMTIHEFEAQFPHRKVFVEGLRHEGKVIDTDPNSKLSTGDIIAVGGEYDAFVEFFDHPDSFDETQDSELLNQPVLGVDVYVTSRGINGKTLAELGKTTSSHGIFLRKIKRGPKAIEIPILPQTRLFRGDILTLSGLTKDVERVTKQLGVIDQRGNSMDVAFWAFAIVIGALLGSLVFKIGNLPLTLSTAGGVLIAGLIFSWVRSFHPTFGWVPEPTVWFMNSVGLNVFIAAIGISAGPNFVAGLKELGFSLFLWGVVATTLPLFFAALVGKYVFKFHPAILLGCCAGARTTTASLGMINEKAKSNIPSLGYTITYAVGNTLLTMWGLVLILILT.

Transmembrane regions (helical) follow at residues 10 to 27, 34 to 53, 63 to 85, 92 to 114, and 155 to 177; these read IYPEIAVFLSLAIGYWVG, FSLGAVTATLLAAVVIGQFD, IFFLMFLFAVGYGIGPQFVQGIA, ALFAVVACLFSLLFPILCAKIAG, and FSVIPVAYAVTYIFGTVGSAIVL. 2 consecutive RCK C-terminal domains span residues 204–288 and 290–377; these read TENA…HPDS and DETQ…QLGV. A run of 6 helical transmembrane segments spans residues 387-404, 408-430, 443-465, 475-497, 504-526, and 539-561; these read VAFWAFAIVIGALLGSLV, GNLPLTLSTAGGVLIAGLIFSWV, PTVWFMNSVGLNVFIAAIGISAG, LGFSLFLWGVVATTLPLFFAALV, FHPAILLGCCAGARTTTASLGMI, and YTITYAVGNTLLTMWGLVLILIL.

The protein belongs to the AAE transporter (TC 2.A.81) family.

The protein resides in the cell membrane. This is an uncharacterized protein from Shewanella oneidensis (strain ATCC 700550 / JCM 31522 / CIP 106686 / LMG 19005 / NCIMB 14063 / MR-1).